A 464-amino-acid chain; its full sequence is Growth hormone-releasing hormone receptor (464 aa).

Positions 1-22 are cleaved as a signal peptide; the sequence is MDSLLWATWVLCLLNLWGVALG. Over 23-130 the chain is Extracellular; it reads HLHLECDFIT…EEKSYFSTVK (108 aa). Cystine bridges form between Cys-41–Cys-64, Cys-55–Cys-96, and Cys-78–Cys-112. Residue Asn-50 is glycosylated (N-linked (GlcNAc...) asparagine). Residues 131–151 form a helical membrane-spanning segment; it reads IIYTTGHSISIVALCVAIAIL. Over 152-167 the chain is Cytoplasmic; that stretch reads VALRRLHCPRNYIHTQ. A helical membrane pass occupies residues 168-188; sequence LFATFILKASAVFLKDAAVFQ. Residues 189 to 210 lie on the Extracellular side of the membrane; the sequence is GDSTDHCSMSTILCKVSVAVSH. The chain crosses the membrane as a helical span at residues 211–231; that stretch reads FATMTNFSWLLAEAVYLSCLL. The Cytoplasmic portion of the chain corresponds to 232–240; sequence ASTSPRSKP. The helical transmembrane segment at 241–261 threads the bilayer; sequence AFWWLVLAGWGLPVLCTGTWV. The Extracellular segment spans residues 262–283; the sequence is GCKLAFEDTACWDLDDSSPYWW. Residues 284–304 form a helical membrane-spanning segment; sequence IIKGPIVLSVGVNFGLFLNII. The Cytoplasmic portion of the chain corresponds to 305–372; sequence CILLRKLGPA…QLPWRLSKST (68 aa). A helical transmembrane segment spans residues 373–393; it reads LLLIPLFGIHYIIFNFLPDSA. Residues 394 to 398 lie on the Extracellular side of the membrane; it reads GLGIR. Residues 399–419 traverse the membrane as a helical segment; that stretch reads LPLELGLGSFQGFVVAVLYCF. Over 420 to 464 the chain is Cytoplasmic; that stretch reads LNQEVRTEISRKWYGHDPELLPARRTCTEWTTPPRSRVKVLTSEC.

It belongs to the G-protein coupled receptor 2 family. As to expression, pituitary gland.

Its subcellular location is the cell membrane. Its function is as follows. Receptor for GRF, coupled to G proteins which activate adenylyl cyclase. Stimulates somatotroph cell growth, growth hormone gene transcription and growth hormone secretion. This chain is Growth hormone-releasing hormone receptor (Ghrhr), found in Rattus norvegicus (Rat).